A 299-amino-acid polypeptide reads, in one-letter code: B3 domain-containing transcription factor NGA2 (299 aa).

The tract at residues 1-21 is disordered; the sequence is MNQEDKEKPIEEASSSMEREH. Residues 23–129 constitute a DNA-binding region (TF-B3); it reads FDKVVTPSDV…KLYIDWRRRP (107 aa). The segment at 226–249 is disordered; that stretch reads GGGGSVNSTEEESSSSGGSIPRGR.

The protein resides in the nucleus. Regulates lateral organ growth. Functionally redundant with NGA1, NGA3 and NGA4. In Arabidopsis thaliana (Mouse-ear cress), this protein is B3 domain-containing transcription factor NGA2 (NGA2).